Here is a 118-residue protein sequence, read N- to C-terminus: Small ribosomal subunit protein uS13 (118 aa).

Residues 92 to 118 (RRNLPVRGQNTKNNARTRKGPTRPLKR) form a disordered region. Residues 106 to 118 (ARTRKGPTRPLKR) are compositionally biased toward basic residues.

This sequence belongs to the universal ribosomal protein uS13 family. In terms of assembly, part of the 30S ribosomal subunit. Forms a loose heterodimer with protein S19. Forms two bridges to the 50S subunit in the 70S ribosome.

Functionally, located at the top of the head of the 30S subunit, it contacts several helices of the 16S rRNA. In the 70S ribosome it contacts the 23S rRNA (bridge B1a) and protein L5 of the 50S subunit (bridge B1b), connecting the 2 subunits; these bridges are implicated in subunit movement. Contacts the tRNAs in the A and P-sites. This chain is Small ribosomal subunit protein uS13, found in Psychrobacter arcticus (strain DSM 17307 / VKM B-2377 / 273-4).